Consider the following 57-residue polypeptide: Large ribosomal subunit protein eL20 (57 aa).

It belongs to the eukaryotic ribosomal protein eL20 family. In terms of assembly, part of the 50S ribosomal subunit. Binds 23S rRNA.

In Archaeoglobus fulgidus (strain ATCC 49558 / DSM 4304 / JCM 9628 / NBRC 100126 / VC-16), this protein is Large ribosomal subunit protein eL20.